A 500-amino-acid chain; its full sequence is Cryptochrome DASH (500 aa).

One can recognise a Photolyase/cryptochrome alpha/beta domain in the interval 4–138 (KTVLVWYRND…PVRSFWGTTL (135 aa)).

The protein belongs to the DNA photolyase class-1 family. FAD is required as a cofactor. The cofactor is (6R)-5,10-methylene-5,6,7,8-tetrahydrofolate.

Functionally, may have a photoreceptor function. Binds DNA; probably functions as a transcriptional repressor. This is Cryptochrome DASH (cry) from Gloeobacter violaceus (strain ATCC 29082 / PCC 7421).